Consider the following 337-residue polypeptide: Fructose-1,6-bisphosphatase class 1 (337 aa).

Residues Glu-89, Asp-112, Leu-114, and Asp-115 each contribute to the Mg(2+) site. Residues 115–118, Asn-208, Tyr-241, and Lys-271 each bind substrate; that span reads DGSS. Glu-277 is a binding site for Mg(2+).

The protein belongs to the FBPase class 1 family. As to quaternary structure, homotetramer. Mg(2+) serves as cofactor.

It is found in the cytoplasm. The enzyme catalyses beta-D-fructose 1,6-bisphosphate + H2O = beta-D-fructose 6-phosphate + phosphate. The protein operates within carbohydrate biosynthesis; gluconeogenesis. The protein is Fructose-1,6-bisphosphatase class 1 of Yersinia enterocolitica serotype O:8 / biotype 1B (strain NCTC 13174 / 8081).